A 282-amino-acid chain; its full sequence is Phosphatidylserine decarboxylase proenzyme (282 aa).

Catalysis depends on charge relay system; for autoendoproteolytic cleavage activity residues Asp85, His142, and Ser244. The Schiff-base intermediate with substrate; via pyruvic acid; for decarboxylase activity role is filled by Ser244. Pyruvic acid (Ser); by autocatalysis is present on Ser244.

Belongs to the phosphatidylserine decarboxylase family. PSD-B subfamily. Prokaryotic type I sub-subfamily. Heterodimer of a large membrane-associated beta subunit and a small pyruvoyl-containing alpha subunit. The cofactor is pyruvate. Is synthesized initially as an inactive proenzyme. Formation of the active enzyme involves a self-maturation process in which the active site pyruvoyl group is generated from an internal serine residue via an autocatalytic post-translational modification. Two non-identical subunits are generated from the proenzyme in this reaction, and the pyruvate is formed at the N-terminus of the alpha chain, which is derived from the carboxyl end of the proenzyme. The autoendoproteolytic cleavage occurs by a canonical serine protease mechanism, in which the side chain hydroxyl group of the serine supplies its oxygen atom to form the C-terminus of the beta chain, while the remainder of the serine residue undergoes an oxidative deamination to produce ammonia and the pyruvoyl prosthetic group on the alpha chain. During this reaction, the Ser that is part of the protease active site of the proenzyme becomes the pyruvoyl prosthetic group, which constitutes an essential element of the active site of the mature decarboxylase.

The protein localises to the cell membrane. The catalysed reaction is a 1,2-diacyl-sn-glycero-3-phospho-L-serine + H(+) = a 1,2-diacyl-sn-glycero-3-phosphoethanolamine + CO2. Its pathway is phospholipid metabolism; phosphatidylethanolamine biosynthesis; phosphatidylethanolamine from CDP-diacylglycerol: step 2/2. In terms of biological role, catalyzes the formation of phosphatidylethanolamine (PtdEtn) from phosphatidylserine (PtdSer). The polypeptide is Phosphatidylserine decarboxylase proenzyme (Coxiella burnetii (strain Dugway 5J108-111)).